A 159-amino-acid chain; its full sequence is FCS-Like Zinc finger 2 (159 aa).

The FLZ-type zinc-finger motif lies at 75-119 (HFLDSCFLCKKRLGDNRDIFMYRGDTPFCSEECREEQIERDEAKE). A compositionally biased stretch (basic and acidic residues) spans 113 to 122 (ERDEAKEKKQ). Positions 113–159 (ERDEAKEKKQSLSTSVKAMRRNEKRSSSSSPTRSRNYAFRTGTVAAA) are disordered.

Belongs to the FLZ family. In terms of assembly, interacts with KIN10 and KIN11 via its FLZ-type zinc finger domain. Interacts with KINB1, KINB2, KINB3 and SNF4 via its N-terminal part. Forms heterodimer with FLZ7, FLZ10, FLZ11, FLZ12, FLZ15, FLZ17 and FLZ18 in vitro.

In terms of biological role, may act as an adapter to facilitate the interaction of SnRK1 complex with effector proteins, conferring tissue- and stimulus-type specific differences in the SnRK1 regulation pathway. The polypeptide is FCS-Like Zinc finger 2 (Arabidopsis thaliana (Mouse-ear cress)).